The sequence spans 477 residues: Probable cytosolic Fe-S cluster assembly factor GL21135 (477 aa).

The [4Fe-4S] cluster site is built by cysteine 23, cysteine 69, cysteine 72, cysteine 75, cysteine 188, cysteine 244, cysteine 396, and cysteine 400.

The protein belongs to the NARF family.

Its function is as follows. Component of the cytosolic iron-sulfur (Fe/S) protein assembly machinery. Required for maturation of extramitochondrial Fe/S proteins. This Drosophila persimilis (Fruit fly) protein is Probable cytosolic Fe-S cluster assembly factor GL21135.